The following is a 117-amino-acid chain: Protein OPG035 (117 aa).

It belongs to the poxviridae OPG035 family.

In terms of biological role, bcl-2-like protein which contributes to virulence by preventing host NF-kappa-B activation in response to pro-inflammatory stimuli such as TNF-alpha or IL1B. The protein is Protein OPG035 (OPG035) of Homo sapiens (Human).